A 269-amino-acid chain; its full sequence is Intercellular adhesion molecule 4 (269 aa).

An N-terminal signal peptide occupies residues 1-20 (SLFPLSLLFFLAAAYPGVGS). Over 21 to 238 (ALGRRTKRAQ…MLAWSSAPTA (218 aa)) the chain is Extracellular. 2 consecutive Ig-like C2-type domains span residues 60 to 122 (GKSV…TRWA) and 144 to 215 (GRKY…LNLD). N-linked (GlcNAc...) asparagine glycosylation is found at N66, N76, N188, and N221. 4 cysteine pairs are disulfide-bonded: C67–C111, C67–C115, C71–C115, and C151–C208. The chain crosses the membrane as a helical span at residues 239–259 (LASVSIAALVGILLTVGAAYL). Topologically, residues 260–269 (CKCLAMKSQA) are cytoplasmic.

It belongs to the immunoglobulin superfamily. ICAM family. N- and O-glycosylated.

The protein localises to the cell membrane. Its function is as follows. ICAM proteins are ligands for the leukocyte adhesion protein LFA-1 (integrin alpha-L/beta-2). ICAM4 is also a ligand for alpha-4/beta-1 and alpha-V integrins. This chain is Intercellular adhesion molecule 4 (ICAM4), found in Pan troglodytes (Chimpanzee).